A 189-amino-acid chain; its full sequence is MRFGMSTKLKPTKGENYRNGKLRVFFLVSLLLFLLSCSSPKEVKGKPEEFFLKNYEKGIYRYAILENKPQDTEYCKVHLKDLIKEGEYILSLPSRYKVEREKLSTKLYCELFSKGRFLEVAGERFTPPSALKVVTFVELKEGLFLWFLERVRAQGGGGGGIIFLPLPIPWGGGYNYEGRYRTPTGRYGK.

This is an uncharacterized protein from Aquifex aeolicus (strain VF5).